We begin with the raw amino-acid sequence, 275 residues long: Thymidylate synthase (275 aa).

138–139 (RR) contributes to the dUMP binding site. C158 acts as the Nucleophile in catalysis. DUMP contacts are provided by residues 178–181 (RSCD), N189, and 219–221 (HIY). Residue D181 participates in (6R)-5,10-methylene-5,6,7,8-tetrahydrofolate binding. Position 274 (A274) interacts with (6R)-5,10-methylene-5,6,7,8-tetrahydrofolate.

It belongs to the thymidylate synthase family. Bacterial-type ThyA subfamily. Homodimer.

Its subcellular location is the cytoplasm. It catalyses the reaction dUMP + (6R)-5,10-methylene-5,6,7,8-tetrahydrofolate = 7,8-dihydrofolate + dTMP. Its pathway is pyrimidine metabolism; dTTP biosynthesis. In terms of biological role, catalyzes the reductive methylation of 2'-deoxyuridine-5'-monophosphate (dUMP) to 2'-deoxythymidine-5'-monophosphate (dTMP) while utilizing 5,10-methylenetetrahydrofolate (mTHF) as the methyl donor and reductant in the reaction, yielding dihydrofolate (DHF) as a by-product. This enzymatic reaction provides an intracellular de novo source of dTMP, an essential precursor for DNA biosynthesis. This chain is Thymidylate synthase, found in Fusobacterium nucleatum subsp. nucleatum (strain ATCC 25586 / DSM 15643 / BCRC 10681 / CIP 101130 / JCM 8532 / KCTC 2640 / LMG 13131 / VPI 4355).